A 169-amino-acid polypeptide reads, in one-letter code: ATP-dependent Clp protease adapter protein CLPS2, chloroplastic (169 aa).

A chloroplast-targeting transit peptide spans 1–33 (MLATRCKCNLPSRSFVAPARSVRTRALHVEGRF). Positions 67–92 (DAKTDNGNNGSNTDKDKKSPPGGGNY) are disordered.

This sequence belongs to the ClpS family.

It is found in the plastid. Its subcellular location is the chloroplast stroma. Small adapter protein that modulate the activity of plastid Clp protease system (CLPC). Probably involved in substrate selection for plastid CLPC. The protein is ATP-dependent Clp protease adapter protein CLPS2, chloroplastic of Chlamydomonas reinhardtii (Chlamydomonas smithii).